Reading from the N-terminus, the 617-residue chain is Sphingosine kinase 2 (617 aa).

The required for binding to sulfatide and phosphoinositides and for membrane localization stretch occupies residues 1-140; the sequence is MAPPPLLPVA…LSGDQEITPE (140 aa). Positions 87–95 match the Nuclear localization signal motif; it reads RGRRGGRRR. The region spanning 143-290 is the DAGKc domain; it reads PRKPRLLILV…LDLLSVTLAS (148 aa). ATP is bound by residues 153–155 and 185–189; these read NPF and TERQN. 210–213 provides a ligand contact to substrate; that stretch reads SGDG. Residue D212 is the Proton donor/acceptor of the active site. ATP is bound by residues E217 and 242–244; that span reads GSG. D309 is a substrate binding site. R316 and R322 together coordinate ATP. Residues S358 and S364 each carry the phosphoserine modification. Positions 371 to 472 are disordered; it reads APAPAATHSP…GFLPPTHSAP (102 aa). T377 carries the post-translational modification Phosphothreonine. Residues 381–390 carry the Nuclear export signal motif; the sequence is LHRSVSDLPL. Phosphoserine occurs at positions 384 and 386. Gly residues predominate over residues 412–426; the sequence is NGGGPELTGDWGGAG. Residue T578 is modified to Phosphothreonine. 586–588 is a binding site for ATP; it reads DGE.

In terms of assembly, interacts with histone H3. Interacts with HDAC1, HDAC2, MBD2 and SIN3A. Interacts with EEF1A1; the interaction enhances SPHK2 kinase activity. Interacts with PHB2. The cofactor is Mg(2+). In terms of processing, phosphorylated by PKD on Ser-384 and Ser-386 upon PMA treatment. Phosphorylation induces export from the nucleus to the cytoplasm. Phosphorylated by MAPK1 and MAPK2 at Thr-578, phosphorylation is induced by agonists such as EGF and PMA and increases kinase activity. Post-translationally, cleaved by CASP1 in apoptotic cells. The truncated form is released from cells. In terms of tissue distribution, expressed in heart, brain, liver, kidney and testis. Expressed by mast cells (at protein level). In the substantia nigra, expressed by dopaminergic neurons (at protein level).

The protein resides in the lysosome membrane. It is found in the cytoplasm. Its subcellular location is the cell membrane. It localises to the endoplasmic reticulum. The protein localises to the nucleus. The protein resides in the mitochondrion inner membrane. It carries out the reaction a sphingoid base + ATP = a sphingoid 1-phosphate + ADP + H(+). It catalyses the reaction sphing-4-enine + ATP = sphing-4-enine 1-phosphate + ADP + H(+). The catalysed reaction is sphinganine + ATP = sphinganine 1-phosphate + ADP + H(+). The enzyme catalyses (4R)-hydroxysphinganine + ATP = (4R)-hydroxysphinganine 1-phosphate + ADP + H(+). Catalyzes the phosphorylation of sphingosine to form sphingosine-1-phosphate (SPP), a lipid mediator with both intra- and extracellular functions. Also acts on D-erythro-dihydrosphingosine, D-erythro-sphingosine and L-threo-dihydrosphingosine. Binds phosphoinositides. In contrast to prosurvival SPHK1, has a positive effect on intracellular ceramide levels, inhibits cells growth and enhances apoptosis. In mitochondria, is important for cytochrome-c oxidase assembly and mitochondrial respiration. The SPP produced in mitochondria binds PHB2 and modulates the regulation via PHB2 of complex IV assembly and respiration. In nucleus, plays a role in epigenetic regulation of gene expression. Interacts with HDAC1 and HDAC2 and, through SPP production, inhibits their enzymatic activity, preventing the removal of acetyl groups from lysine residues with histones. Up-regulates acetylation of histone H3-K9, histone H4-K5 and histone H2B-K12. In nucleus, may have an inhibitory effect on DNA synthesis and cell cycle. In mast cells, is the main regulator of SPP production which mediates calcium influx, NF-kappa-B activation, cytokine production, such as TNF and IL6, and degranulation of mast cells. In dopaminergic neurons, is involved in promoting mitochondrial functions regulating ATP and ROS levels. Also involved in the regulation of glucose and lipid metabolism. This Mus musculus (Mouse) protein is Sphingosine kinase 2.